A 485-amino-acid polypeptide reads, in one-letter code: MKVLFAVSECAPFAKSGGLADVAGALPKELRRLGIDARVMLPKYETIAPEWKKKMKKVAELIVPVGWRRQYCGVEELRHDGVIYYFIDNEYYFKRPQLYGHYDDGERFAYFCRAVLEVLPEIQFQPDVIHCHDWHTGMVPFLLREQYRHELFYVDMRTVFTIHNLQFQGLFPRGILEDLLNLDGRYFTVDHLEFYGCVSFMKGALVASDLITTVSPTYKEEIQTAYYGERLDGLLRARRDDLLGILNGIDDEFYNPEADPFLTATYSVHTRERKQLNKRALQRQFGLPEWDDVPLIAMVTRMTAQKGLDLVTCVFHEMMSEDMQLVVLGTGDWRFEQFFSQMAAAYPGKVGVYIGFHEPLAHQIYAGADLFLMPSLFEPCGLSQMIALRYGTIPIVRETGGLNDTVQSYNEITKEGNGFSFTNFNAHDMLYTIRRALSFYRQPSVWEQLTERAMRGDYSWRRSANQYKQAYEQLIKKEEHTLVHG.

K15 is an ADP-alpha-D-glucose binding site.

The protein belongs to the glycosyltransferase 1 family. Bacterial/plant glycogen synthase subfamily.

The catalysed reaction is [(1-&gt;4)-alpha-D-glucosyl](n) + ADP-alpha-D-glucose = [(1-&gt;4)-alpha-D-glucosyl](n+1) + ADP + H(+). Its pathway is glycan biosynthesis; glycogen biosynthesis. Synthesizes alpha-1,4-glucan chains using ADP-glucose. This chain is Glycogen synthase, found in Geobacillus thermodenitrificans (strain NG80-2).